A 59-amino-acid polypeptide reads, in one-letter code: Large ribosomal subunit protein bL32 (59 aa).

The interval 1-59 (MAVQQNKKSPSKRGMHRSHDFLTNPPLAVEPTSGEIHLRHHVSPNGYYRGRKVLPAKGE) is disordered. Residues 49-59 (RGRKVLPAKGE) show a composition bias toward basic residues.

This sequence belongs to the bacterial ribosomal protein bL32 family.

This chain is Large ribosomal subunit protein bL32, found in Methylobacillus flagellatus (strain ATCC 51484 / DSM 6875 / VKM B-1610 / KT).